Reading from the N-terminus, the 363-residue chain is Aminomethyltransferase (363 aa).

Belongs to the GcvT family. The glycine cleavage system is composed of four proteins: P, T, L and H.

It catalyses the reaction N(6)-[(R)-S(8)-aminomethyldihydrolipoyl]-L-lysyl-[protein] + (6S)-5,6,7,8-tetrahydrofolate = N(6)-[(R)-dihydrolipoyl]-L-lysyl-[protein] + (6R)-5,10-methylene-5,6,7,8-tetrahydrofolate + NH4(+). Its function is as follows. The glycine cleavage system catalyzes the degradation of glycine. This Staphylococcus aureus (strain N315) protein is Aminomethyltransferase.